Reading from the N-terminus, the 121-residue chain is Large ribosomal subunit protein bL12 (121 aa).

The protein belongs to the bacterial ribosomal protein bL12 family. As to quaternary structure, homodimer. Part of the ribosomal stalk of the 50S ribosomal subunit. Forms a multimeric L10(L12)X complex, where L10 forms an elongated spine to which 2 to 4 L12 dimers bind in a sequential fashion. Binds GTP-bound translation factors.

Its function is as follows. Forms part of the ribosomal stalk which helps the ribosome interact with GTP-bound translation factors. Is thus essential for accurate translation. The protein is Large ribosomal subunit protein bL12 of Escherichia coli O81 (strain ED1a).